A 195-amino-acid chain; its full sequence is Endoribonuclease YbeY (195 aa).

Zn(2+)-binding residues include H153, H157, and H163.

It belongs to the endoribonuclease YbeY family. The cofactor is Zn(2+).

It localises to the cytoplasm. Single strand-specific metallo-endoribonuclease involved in late-stage 70S ribosome quality control and in maturation of the 3' terminus of the 16S rRNA. In Prochlorococcus marinus (strain SARG / CCMP1375 / SS120), this protein is Endoribonuclease YbeY.